We begin with the raw amino-acid sequence, 86 residues long: Neurotoxin 3FTx-RK (86 aa).

The first 21 residues, 1-21 (MKTLLLTLVVVTIVCLELGYT), serve as a signal peptide directing secretion. Intrachain disulfides connect Cys24/Cys45, Cys38/Cys63, Cys67/Cys78, and Cys79/Cys84.

In terms of tissue distribution, expressed by the venom gland.

Its subcellular location is the secreted. In Bungarus fasciatus (Banded krait), this protein is Neurotoxin 3FTx-RK.